The sequence spans 148 residues: MALYEHVLLARQDISQQQVDALVEQFKGVLEANGGKFGKVENWGLRPLTYRIKKNRKAYYTLVNIDAPAAAVAEMERQMRINEDVLRFLTVRVEEHEEGQSAMLTRRDDRRERDGDDRPRRREGGFDRGDRGDRSPRRPRDNEAGEGA.

The interval 96-148 is disordered; the sequence is HEEGQSAMLTRRDDRRERDGDDRPRRREGGFDRGDRGDRSPRRPRDNEAGEGA.

Belongs to the bacterial ribosomal protein bS6 family.

In terms of biological role, binds together with bS18 to 16S ribosomal RNA. The protein is Small ribosomal subunit protein bS6 of Brucella suis (strain ATCC 23445 / NCTC 10510).